Consider the following 701-residue polypeptide: Translation initiation factor IF-2 (701 aa).

Positions 48 to 62 (KIYKPEKAEQSEKSQ) are enriched in basic and acidic residues. The disordered stretch occupies residues 48-123 (KIYKPEKAEQ…EPKEMPSKIT (76 aa)). Composition is skewed to low complexity over residues 63-89 (QKNT…NNKP) and 97-109 (NNKN…NNKQ). The segment covering 110 to 119 (PKQEEPKEMP) has biased composition (basic and acidic residues). A tr-type G domain is found at 203-372 (ERPAVVTIMG…VLTSEVQELK (170 aa)). Residues 212-219 (GHVDHGKT) are G1. 212-219 (GHVDHGKT) is a GTP binding site. The interval 237-241 (GITQH) is G2. The interval 258–261 (DTPG) is G3. Residues 258-262 (DTPGH) and 312-315 (NKID) contribute to the GTP site. A G4 region spans residues 312-315 (NKID). Residues 348–350 (SAL) form a G5 region.

This sequence belongs to the TRAFAC class translation factor GTPase superfamily. Classic translation factor GTPase family. IF-2 subfamily.

The protein resides in the cytoplasm. One of the essential components for the initiation of protein synthesis. Protects formylmethionyl-tRNA from spontaneous hydrolysis and promotes its binding to the 30S ribosomal subunits. Also involved in the hydrolysis of GTP during the formation of the 70S ribosomal complex. This Staphylococcus saprophyticus subsp. saprophyticus (strain ATCC 15305 / DSM 20229 / NCIMB 8711 / NCTC 7292 / S-41) protein is Translation initiation factor IF-2.